A 428-amino-acid chain; its full sequence is MKKKLNLCPKGTYDFFGQSAKIFIDVRKVFFDQAKKFNFSYIETPIFEYANIFLTTNQIADIVSKELYKFFDKSGRELALRPEGTAPIMRSVAQHKLFQTEKKFFYFGPMFRYENPQKGRFRQFYQAGFEIINYKKDSLEFQILEIIVLIKSIFKDLGINEYELKINFLSNLTTRNIYEKNLAQYFEKFSDKLEPISKIRIKKNPLRILDDKIEQEKEFVKLAPKINTFWTMEDKNIFNRITSILEEFKISYKVDYNLVRGLDYYDDFVFEFIDTSQTLGTKLALVGGGCYNNLPTKFGLNNFKSIGMAFGIERLIEIIKSKKNIKEQNLDFFLLSFTDKEILLNFKLAKILRKENFLVDLNKTPFSVSKGFQLAKKSGAKFVFFFEKNQAKNYISLKNLQTGKNEQILYTEINFEYLNSIIKASENA.

Belongs to the class-II aminoacyl-tRNA synthetase family. In terms of assembly, homodimer.

It is found in the cytoplasm. It carries out the reaction tRNA(His) + L-histidine + ATP = L-histidyl-tRNA(His) + AMP + diphosphate + H(+). The sequence is that of Histidine--tRNA ligase from Mesomycoplasma hyopneumoniae (strain 7448) (Mycoplasma hyopneumoniae).